The chain runs to 196 residues: Ribosome maturation factor RimP (196 aa).

Residues 164–196 are disordered; the sequence is LAPQKPNKPGPKKPGHEKKKPSNESAAGKPRAE. Basic residues predominate over residues 173–182; that stretch reads GPKKPGHEKK.

Belongs to the RimP family.

It localises to the cytoplasm. Its function is as follows. Required for maturation of 30S ribosomal subunits. The polypeptide is Ribosome maturation factor RimP (Xanthomonas axonopodis pv. citri (strain 306)).